A 43-amino-acid chain; its full sequence is Defensin-B (43 aa).

Intrachain disulfides connect Cys3-Cys34, Cys20-Cys39, and Cys24-Cys41.

Its subcellular location is the secreted. In terms of biological role, antibacterial protein. Strong activity against the Gram-positive bacteria M.luteus, B.megaterium and S.aureus. Reduced activity against Gram-positive bacterium B.subtilis and weak activity against Gram-negative bacterium X.japonicus. No detectable activity against the Gram-negative bacteria E.asbriae, E.coli, P.aeruginosa and S.marcescens. The polypeptide is Defensin-B (Anomala cuprea (Cupreous chafer beetle)).